The chain runs to 232 residues: GTP cyclohydrolase 1 (232 aa).

The disordered stretch occupies residues 1–24; it reads MSDNLKSYQDNHIENEDEEIYERS. The Zn(2+) site is built by Cys-121, His-124, and Cys-192.

It belongs to the GTP cyclohydrolase I family. As to quaternary structure, toroid-shaped homodecamer, composed of two pentamers of five dimers.

It catalyses the reaction GTP + H2O = 7,8-dihydroneopterin 3'-triphosphate + formate + H(+). The protein operates within cofactor biosynthesis; 7,8-dihydroneopterin triphosphate biosynthesis; 7,8-dihydroneopterin triphosphate from GTP: step 1/1. Its function is as follows. First enzyme in the biosynthesis of tetrahydrobiopterin (BH4). Catalyzes the conversion of GTP into dihydroneopterin triphosphate (7,8-dihydroneopterin 3'-triphosphate), which is subsequently catalyzed by 6-pyruvoyltetrahydropterin synthase (ptsA) and sepiapterin reductase (sprA). In Dictyostelium discoideum (Social amoeba), this protein is GTP cyclohydrolase 1 (gchA).